We begin with the raw amino-acid sequence, 200 residues long: LexA repressor (200 aa).

The segment at residues 28–48 is a DNA-binding region (H-T-H motif); sequence RAEISNRLGFRSANAAEEHLK. Residues serine 121 and lysine 158 each act as for autocatalytic cleavage activity in the active site.

It belongs to the peptidase S24 family. Homodimer.

It carries out the reaction Hydrolysis of Ala-|-Gly bond in repressor LexA.. Represses a number of genes involved in the response to DNA damage (SOS response), including recA and lexA. In the presence of single-stranded DNA, RecA interacts with LexA causing an autocatalytic cleavage which disrupts the DNA-binding part of LexA, leading to derepression of the SOS regulon and eventually DNA repair. This Hahella chejuensis (strain KCTC 2396) protein is LexA repressor.